The chain runs to 491 residues: MVYRNRSKSVLSTHSKKSDDKAHYKSRSKKKSKSRSKKRLRIYWRYISIVWILWLGLISYYESVVVKRAMKKCQWSTWEDWPEGAESHRVGLFADPQIMDEYSYPGRPQIVNYFTRVIVDHYHRRNWKYVQYYLDPDSNFFLGDLFDGGRNWDDKQWIKEYTRFNQIFPKKPLRRTVMSLPGNHDIGFGDTVVESSLQRFSSYFGETSSSLDAGNHTFVLLDTISLSDKTNPNVSRVPRQFLDNFAMGSHPLPRILLTHVPLWRDPEQQTCGQLRESKEPFPIQKGHQYQTVIENDISQEILTKIQPEILFSGDDHDHCQISHSYPFQGKTKNAQEITVKSCAMNMGISRPAIQLLSLYNPSDLTMVNAGGEYASKTYQTELCYMPDPYKAIRMYLWGLLFSAAFIAYMHFFPKSFNNRVATIMNRVFTRPDGNTSDLPLPTSISKSKSKKSLTHSKYAVNDTRSIKQFLVNAIVLFVSVMPIFIYFYTVV.

Positions 1–33 are disordered; it reads MVYRNRSKSVLSTHSKKSDDKAHYKSRSKKKSK. Over 1–39 the chain is Cytoplasmic; sequence MVYRNRSKSVLSTHSKKSDDKAHYKSRSKKKSKSRSKKR. Positions 24–33 are enriched in basic residues; the sequence is YKSRSKKKSK. The helical transmembrane segment at 40–60 threads the bilayer; that stretch reads LRIYWRYISIVWILWLGLISY. Residues 61 to 391 are Extracellular-facing; it reads YESVVVKRAM…LCYMPDPYKA (331 aa). A divalent metal cation is bound by residues Asp-95, Asp-144, Asn-183, and His-323. The helical transmembrane segment at 392–412 threads the bilayer; that stretch reads IRMYLWGLLFSAAFIAYMHFF. The Cytoplasmic segment spans residues 413-465; it reads PKSFNNRVATIMNRVFTRPDGNTSDLPLPTSISKSKSKKSLTHSKYAVNDTRS. A helical membrane pass occupies residues 466 to 486; the sequence is IKQFLVNAIVLFVSVMPIFIY. Over 487-491 the chain is Extracellular; that stretch reads FYTVV.

This sequence belongs to the metallophosphoesterase superfamily. MPPE1 family. It depends on a divalent metal cation as a cofactor.

It localises to the membrane. In terms of biological role, probable metallophosphoesterase which may participate in recombinational repair of double -strand breaks. The chain is Cell division control protein 1 (CDC1) from Saccharomyces cerevisiae (strain ATCC 204508 / S288c) (Baker's yeast).